The chain runs to 423 residues: ATP-dependent Clp protease ATP-binding subunit ClpX (423 aa).

Residues 1 to 50 (MTDDTEYRCSFCGKEHHQVDDLIAGPDVRICSECVVLSCEIVEDRRNEAL) form the ClpX-type ZB domain. Zn(2+) contacts are provided by Cys-9, Cys-12, Cys-31, and Cys-34. Residue 126–133 (PTGCGKTY) participates in ATP binding.

It belongs to the ClpX chaperone family. Component of the ClpX-ClpP complex. Forms a hexameric ring that, in the presence of ATP, binds to fourteen ClpP subunits assembled into a disk-like structure with a central cavity, resembling the structure of eukaryotic proteasomes.

Functionally, ATP-dependent specificity component of the Clp protease. It directs the protease to specific substrates. Can perform chaperone functions in the absence of ClpP. This is ATP-dependent Clp protease ATP-binding subunit ClpX from Tropheryma whipplei (strain Twist) (Whipple's bacillus).